Reading from the N-terminus, the 182-residue chain is Small ribosomal subunit protein uS4c (182 aa).

An S4 RNA-binding domain is found at 82 to 143 (MRLDNILFRL…KERSKVLIQN (62 aa)).

This sequence belongs to the universal ribosomal protein uS4 family. In terms of assembly, part of the 30S ribosomal subunit. Contacts protein S5. The interaction surface between S4 and S5 is involved in control of translational fidelity.

It localises to the plastid. The protein resides in the chloroplast. One of the primary rRNA binding proteins, it binds directly to 16S rRNA where it nucleates assembly of the body of the 30S subunit. Functionally, with S5 and S12 plays an important role in translational accuracy. The chain is Small ribosomal subunit protein uS4c (rps4) from Tigridia sp. (strain Lejeune 1997).